Reading from the N-terminus, the 103-residue chain is ESAT-6-like protein EsxF (103 aa).

This sequence belongs to the WXG100 family. CFP-10 subfamily.

The protein localises to the secreted. This chain is ESAT-6-like protein EsxF, found in Mycobacterium tuberculosis (strain CDC 1551 / Oshkosh).